The primary structure comprises 156 residues: Ribosomal RNA large subunit methyltransferase H (156 aa).

Residues Leu-73, Gly-104, and Leu-123–Leu-128 each bind S-adenosyl-L-methionine.

The protein belongs to the RNA methyltransferase RlmH family. As to quaternary structure, homodimer.

Its subcellular location is the cytoplasm. It carries out the reaction pseudouridine(1915) in 23S rRNA + S-adenosyl-L-methionine = N(3)-methylpseudouridine(1915) in 23S rRNA + S-adenosyl-L-homocysteine + H(+). Its function is as follows. Specifically methylates the pseudouridine at position 1915 (m3Psi1915) in 23S rRNA. The sequence is that of Ribosomal RNA large subunit methyltransferase H from Shewanella putrefaciens (strain CN-32 / ATCC BAA-453).